Consider the following 63-residue polypeptide: Hyphancin-3D (63 aa).

Residues 1 to 22 (MNFSRIIFLVFACFVALASVSA) form the signal peptide. Positions 23-26 (APEP) are cleaved as a propeptide — removed by a dipeptidylpeptidase. At Leu61 the chain carries Leucine amide.

The protein belongs to the cecropin family.

The protein localises to the secreted. Functionally, has antibacterial activity. In Hyphantria cunea (Fall webworm moth), this protein is Hyphancin-3D.